The chain runs to 461 residues: Fumarate hydratase class II (461 aa).

Residues 99 to 101 (SGT), 130 to 133 (HPND), 140 to 142 (STN), and Thr-188 contribute to the substrate site. His-189 functions as the Proton donor/acceptor in the catalytic mechanism. Ser-319 is a catalytic residue. Residues Ser-320 and 325-327 (KVN) contribute to the substrate site.

This sequence belongs to the class-II fumarase/aspartase family. Fumarase subfamily. Homotetramer.

Its subcellular location is the cytoplasm. It carries out the reaction (S)-malate = fumarate + H2O. It participates in carbohydrate metabolism; tricarboxylic acid cycle; (S)-malate from fumarate: step 1/1. Its function is as follows. Involved in the TCA cycle. Catalyzes the stereospecific interconversion of fumarate to L-malate. In Prochlorococcus marinus subsp. pastoris (strain CCMP1986 / NIES-2087 / MED4), this protein is Fumarate hydratase class II.